The primary structure comprises 755 residues: MKFNQFSYIPVSPETAYQELRSLGFEVSLDASAKANFESFVRKYFLFFEDTDLALKNWIADPETDLLSFFQSDRPLTAEVFGLVALQLLGFVPNVDFTDSVAFLEKMAFPIAFDGSLNNLHQLLATRTQSGNTLIDQLVAQDLIPISNDYVFFNGKSLATFDTNQLHREVVYVETPVDTDKDGLLDLVKVTILRPNVDFPVPAMMTASPYQQGTNEPSSDKLTHKMEGDLLVKPAGKISLSRPEIKAPEADLTPINPVTKAEERFAHTDTYTLNDYMLARGVASIYVSGVGTFNSEGFMTSGDYQQVLAYKAVIDWLNGRARAFTSRSRQHTITADWASGKVTTTGLSYLGTMSNALATTGVDGLEMVIAEAGISSWYDYYRENGLLVSPGGYPGEDLDTLTEFTYSRALLAGEYLRHQKDYEAYLNELSTDIDRKHGDYNQFWHDRNYVQFADRVKATVVFTHGSQDWNVKPINVYQMFRALPKSLEKHLFFHNGAHVYMNAWQSIDFRESMNALICQKLLGLDNGYTLPTVIWQNNQSEQTWEVLDNFGHDNGKHIQLGKSEASIANHYEEEIFAKYGKAYQSFKDDLFMDKANAITLDFELDQDIQINGRVHLELRVKSSTNRGLISAQVLEMGDKKYLAPIPAPKRMSLDNGRLFKEEALRELPFKQAKYRVITKGHLNLQNRKDLLSIENVTPNEWMTIGLDLQPTIYKLNKGDKLRLVLYTTDFEHTIRDNSDYEVTVDLSQSKMTLPY.

Active-site charge relay system residues include Ser348, Asp468, and His498.

It belongs to the peptidase S15 family. As to quaternary structure, homodimer.

It is found in the cytoplasm. The enzyme catalyses Hydrolyzes Xaa-Pro-|- bonds to release unblocked, N-terminal dipeptides from substrates including Ala-Pro-|-p-nitroanilide and (sequentially) Tyr-Pro-|-Phe-Pro-|-Gly-Pro-|-Ile.. Functionally, removes N-terminal dipeptides sequentially from polypeptides having unsubstituted N-termini provided that the penultimate residue is proline. The chain is Xaa-Pro dipeptidyl-peptidase from Streptococcus thermophilus (strain CNRZ 1066).